A 130-amino-acid polypeptide reads, in one-letter code: MAKVQYFGTGRRKKSIARVRLVPGEGKITINKRSIEEYFGLETLRVIVNQPLVLTSTNGKFDVLVNVHGGGFTGQAGAIRHGISRALLKADENLRLELKKAGFLTRDPRMKERKKYGLKKARRAPQFSKR.

A disordered region spans residues 109–130; sequence RMKERKKYGLKKARRAPQFSKR. Over residues 111–130 the composition is skewed to basic residues; it reads KERKKYGLKKARRAPQFSKR.

It belongs to the universal ribosomal protein uS9 family.

The polypeptide is Small ribosomal subunit protein uS9 (Clostridium kluyveri (strain NBRC 12016)).